The following is a 297-amino-acid chain: Bax inhibitor 1 (297 aa).

The Lumenal portion of the chain corresponds to 1–53; the sequence is MSGPPPPYEEQSSHLYGQPASSQDGNAFIPEDFKYSTVVISCEPIIRQRFMHK. Residues 54–74 traverse the membrane as a helical segment; that stretch reads VYSLLSCQLLASLSFCYWASV. The Cytoplasmic portion of the chain corresponds to 75–85; the sequence is STSLQNFIMSH. The chain crosses the membrane as a helical span at residues 86–106; it reads IALFYICMVVSLVSCIWLAVS. The Lumenal segment spans residues 107-146; it reads PRPEDYEASVPEPLLTGSSEEPAQEQRRLPWYVLSSYKQK. The helical transmembrane segment at 147-167 threads the bilayer; that stretch reads LTLLSIFTLSEAYCLSLVTLA. Over 168 to 171 the chain is Cytoplasmic; it reads YDKD. Residues 172–192 form a helical membrane-spanning segment; it reads TVLSALLITTIVVVGVSLTAL. Topologically, residues 193-208 are lumenal; sequence SERFENVLNSATSIYY. Residues 209–229 traverse the membrane as a helical segment; the sequence is WLNWGLWIMIGMGLTALLFGW. At 230 to 239 the chain is on the cytoplasmic side; that stretch reads NTHSSKFNLL. The chain crosses the membrane as a helical span at residues 240-260; that stretch reads YGWLGAILFTAYLFIDTQLIF. Topologically, residues 261 to 270 are lumenal; the sequence is RKVYPDEEVR. A helical membrane pass occupies residues 271–291; it reads CAMMLYLDIVNLFLSILRILA. Topologically, residues 292 to 297 are cytoplasmic; it reads NSNDDN.

It belongs to the BI1 family. LFG subfamily.

The protein localises to the endoplasmic reticulum membrane. It is found in the vacuole membrane. Its subcellular location is the mitochondrion membrane. Links the unfolded protein response and programmed cell death and mediates mitochondrial-dependent apoptosis. Induces cell death and disruption of the mitochondrial transmembrane potential via the mitochondrial phosphate carrier MIR1. Dispensible for starvation-induced autophagy. This is Bax inhibitor 1 (BXI1) from Saccharomyces cerevisiae (strain ATCC 204508 / S288c) (Baker's yeast).